The primary structure comprises 158 residues: Crossover junction endodeoxyribonuclease RuvC (158 aa).

Residues aspartate 7, glutamate 67, and aspartate 139 contribute to the active site. Mg(2+) is bound by residues aspartate 7, glutamate 67, and aspartate 139.

Belongs to the RuvC family. Homodimer which binds Holliday junction (HJ) DNA. The HJ becomes 2-fold symmetrical on binding to RuvC with unstacked arms; it has a different conformation from HJ DNA in complex with RuvA. In the full resolvosome a probable DNA-RuvA(4)-RuvB(12)-RuvC(2) complex forms which resolves the HJ. Mg(2+) serves as cofactor.

It is found in the cytoplasm. It carries out the reaction Endonucleolytic cleavage at a junction such as a reciprocal single-stranded crossover between two homologous DNA duplexes (Holliday junction).. Functionally, the RuvA-RuvB-RuvC complex processes Holliday junction (HJ) DNA during genetic recombination and DNA repair. Endonuclease that resolves HJ intermediates. Cleaves cruciform DNA by making single-stranded nicks across the HJ at symmetrical positions within the homologous arms, yielding a 5'-phosphate and a 3'-hydroxyl group; requires a central core of homology in the junction. The consensus cleavage sequence is 5'-(A/T)TT(C/G)-3'. Cleavage occurs on the 3'-side of the TT dinucleotide at the point of strand exchange. HJ branch migration catalyzed by RuvA-RuvB allows RuvC to scan DNA until it finds its consensus sequence, where it cleaves and resolves the cruciform DNA. The sequence is that of Crossover junction endodeoxyribonuclease RuvC from Prochlorococcus marinus (strain MIT 9211).